The primary structure comprises 230 residues: Flagellar L-ring protein (230 aa).

Residues 1 to 21 (MMLKTVLRLPVCAALLALAAG) form the signal peptide. Cys-22 is lipidated: N-palmitoyl cysteine. The S-diacylglycerol cysteine moiety is linked to residue Cys-22. Residues 34-53 (PLTAPPPPPPQPSARPNGSI) are disordered. The span at 36–46 (TAPPPPPPQPS) shows a compositional bias: pro residues.

The protein belongs to the FlgH family. As to quaternary structure, the basal body constitutes a major portion of the flagellar organelle and consists of four rings (L,P,S, and M) mounted on a central rod.

It is found in the cell outer membrane. The protein resides in the bacterial flagellum basal body. Its function is as follows. Assembles around the rod to form the L-ring and probably protects the motor/basal body from shearing forces during rotation. This Bordetella bronchiseptica (strain ATCC BAA-588 / NCTC 13252 / RB50) (Alcaligenes bronchisepticus) protein is Flagellar L-ring protein.